We begin with the raw amino-acid sequence, 274 residues long: MQLMKSSYLELTARGHVTDLLKPDDTLEMLETYGFAVTQSPVEAVSTAHAYREIAAIREDFGLGEPYVPLLYRDRDEPTVTAVTRKGGSDHPVFHTGEAQGWHTDGLLEDIGTIKTTLLYCVSPAHRGGRTFLLNAGRVFEELRMEDPEAADVLLRDTILGRRSTIPGVDREAVGPVFLELGDGHYATRYGEGRVERWYPADAAEQHALDRALRFFRARRDDPDVRIDLLLRAGQCLIFRNDVLAHGRENFTDDPQRPRLLLRSLHTNAPKKPS.

Residues H103, D105, and H246 each coordinate Fe cation.

Fe(2+) serves as cofactor.

The enzyme catalyses UMP + 2-oxoglutarate + O2 = uridine-5'-aldehyde + succinate + phosphate + CO2. Its pathway is antibiotic biosynthesis. With respect to regulation, inhibited by several divalent cations, including Zn(2+). In terms of biological role, dioxygenase involved in the biosynthesis of the lipopeptidyl nucleoside antibiotic A-90289. Catalyzes the dephosphorylation and oxidation of UMP to generate uridine-5'-aldehyde, the first intermediate in the biosynthesis of A-90289. This chain is Uridine-5'-phosphate dioxygenase, found in Streptomyces sp.